The chain runs to 379 residues: MSQNTSVGIVTPQKIPFEMPLVLENGKTLPRFDLMIETYGELNAEKNNAVLICHALSGNHHVAGKHSAEDKYTGWWDNMVGPGKPIDTERFFVVGLNNLGGCDGSSGPLSINPETGREYGADFPMVTVKDWVKSQAALADYLGIEQWAAVVGGSLGGMQALQWAISYPERVRHALVIASAPKLSTQNIAFNDVARQAILTDPDFNEGHYRSHNTVPARGLRIARMMGHITYLAEDGLGKKFGRDLRSNGYQYGYSVEFEVESYLRYQGDKFVGRFDANTYLLMTKALDYFDPAADFGNSLTRAVQDVQAKFFVASFSTDWRFAPERSHELVKALIAAQKSVQYIEVKSAHGHDAFLMEDEAYMRAVTAYMNNVDKDCRL.

Residues 48-357 (NAVLICHALS…SAHGHDAFLM (310 aa)) form the AB hydrolase-1 domain. S154 acts as the Nucleophile in catalysis. Position 224 (R224) interacts with substrate. Residues D319 and H352 contribute to the active site. D353 serves as a coordination point for substrate.

The protein belongs to the AB hydrolase superfamily. MetX family. In terms of assembly, homodimer.

Its subcellular location is the cytoplasm. It carries out the reaction L-homoserine + succinyl-CoA = O-succinyl-L-homoserine + CoA. It participates in amino-acid biosynthesis; L-methionine biosynthesis via de novo pathway; O-succinyl-L-homoserine from L-homoserine: step 1/1. Activity increases in the presence of MetW. In terms of biological role, transfers a succinyl group from succinyl-CoA to L-homoserine, forming succinyl-L-homoserine. The polypeptide is Homoserine O-succinyltransferase (Neisseria gonorrhoeae).